Here is a 338-residue protein sequence, read N- to C-terminus: MNDKLQEEHNEKDTTSQINGFTPPHMSIDFHSNNNSNIIETIGVSKRLGNSVLSELDSRASSKFEFLKDQSEQQYNGDKNNEPKSGSYNINEFFQAKHDSQFGQMESLDTHYTLLHTPKRKSQHAIPQDRSDSMKRSRPSRSIPYTTPVVNDITRRIRRLKLRNSLVNGNDIVARARSMQANSNINSIKNTPLSKPKPFMHKPNFLMPTTNSLNKINSAHRNTSSSSTASSIPRSKVHRSTSIRDLHAKTKPVERTPVAQGTNSQLKNSVSVFDRLYKQTTFSRSTSMNNLSSGTSAKSKEHTNVKTRLVKSKTSGSLSSNLKQSTATGTKSDRPIWR.

Residues 1-14 show a composition bias toward basic and acidic residues; it reads MNDKLQEEHNEKDT. 3 disordered regions span residues 1–29, 67–88, and 116–146; these read MNDKLQEEHNEKDTTSQINGFTPPHMSID, LKDQSEQQYNGDKNNEPKSGSY, and HTPKRKSQHAIPQDRSDSMKRSRPSRSIPYT. Polar residues predominate over residues 72–88; the sequence is EQQYNGDKNNEPKSGSY. Ser165 bears the Phosphoserine mark. Disordered regions lie at residues 210 to 263 and 284 to 338; these read TNSL…QGTN and RSTS…PIWR. The span at 216-234 shows a compositional bias: low complexity; that stretch reads INSAHRNTSSSSTASSIPR. Residues 242–254 are compositionally biased toward basic and acidic residues; that stretch reads SIRDLHAKTKPVE. Composition is skewed to polar residues over residues 284–297 and 312–330; these read RSTSMNNLSSGTSA and SKTSGSLSSNLKQSTATGT.

This sequence belongs to the SHE1 family.

The protein localises to the cytoplasm. It is found in the cytoskeleton. Its subcellular location is the spindle. It localises to the bud neck. May have a role related to the spindle integrity function of the DAM1 complex, which is essential for proper chromosome segregation. Causes growth arrest when highly overexpressed. This is Mitotic spindle-associated protein SHE1 (SHE1) from Saccharomyces cerevisiae (strain YJM789) (Baker's yeast).